A 243-amino-acid chain; its full sequence is Cell division protein ZipA (243 aa).

Over 1 to 4 (MSDM) the chain is Periplasmic. A helical membrane pass occupies residues 5–25 (AMIRIGILIAGLLLVAAIFLF). At 26-243 (GRPKKSPQGR…APPLTKSPRW (218 aa)) the chain is on the cytoplasmic side. The tract at residues 30 to 89 (KSPQGRRVDKDEGQPRERREPVISSEFGVEDDAAERAEGVEQSELNLEGQDASGGNEVGK) is disordered. Residues 35–50 (RRVDKDEGQPRERREP) show a composition bias toward basic and acidic residues.

Belongs to the ZipA family. As to quaternary structure, interacts with FtsZ via their C-terminal domains.

Its subcellular location is the cell inner membrane. Essential cell division protein that stabilizes the FtsZ protofilaments by cross-linking them and that serves as a cytoplasmic membrane anchor for the Z ring. Also required for the recruitment to the septal ring of downstream cell division proteins. The sequence is that of Cell division protein ZipA from Xanthomonas euvesicatoria pv. vesicatoria (strain 85-10) (Xanthomonas campestris pv. vesicatoria).